The sequence spans 1081 residues: Probable sucrose-phosphate synthase 2 (1081 aa).

3 disordered regions span residues 116-152 (EQGR…PRGN), 239-267 (EPTE…EDLG), and 760-780 (IKRQ…GDVP). Residues 256 to 267 (EPEEEEEEEDLG) are compositionally biased toward acidic residues.

It belongs to the glycosyltransferase 1 family. Homodimer or homotetramer.

The enzyme catalyses beta-D-fructose 6-phosphate + UDP-alpha-D-glucose = sucrose 6(F)-phosphate + UDP + H(+). It functions in the pathway glycan biosynthesis; sucrose biosynthesis; sucrose from D-fructose 6-phosphate and UDP-alpha-D-glucose: step 1/2. Its activity is regulated as follows. Activity is regulated by phosphorylation and moderated by concentration of metabolites and light. In terms of biological role, plays a role in photosynthetic sucrose synthesis by catalyzing the rate-limiting step of sucrose biosynthesis from UDP-glucose and fructose- 6-phosphate. Involved in the regulation of carbon partitioning in the leaves of plants. May regulate the synthesis of sucrose and therefore play a major role as a limiting factor in the export of photoassimilates out of the leaf. Plays a role for sucrose availability that is essential for plant growth and fiber elongation. This is Probable sucrose-phosphate synthase 2 (SPS2) from Craterostigma plantagineum (Blue gem).